The chain runs to 40 residues: Natriuretic peptide PaNP-b (40 aa).

A disulfide bond links Cys-9 and Cys-25. Residues 36–40 (IPGGS) constitute a propeptide that is removed on maturation.

It belongs to the natriuretic peptide family. In terms of tissue distribution, expressed by the venom gland.

The protein localises to the secreted. Its function is as follows. Snake venom natriuretic peptide that targets both NPR1 and NPR2. Exhibits hypotensive and vasodepressor activities. The chain is Natriuretic peptide PaNP-b from Pseudechis australis (Mulga snake).